Here is a 452-residue protein sequence, read N- to C-terminus: Bone morphogenetic protein 5 (452 aa).

The first 25 residues, 1–25 (MHWTVFLLRGIVGFLWSGWVQVGYA), serve as a signal peptide directing secretion. Residues 26-314 (KGGLGDNHVH…ASEVLLRSVR (289 aa)) constitute a propeptide that is removed on maturation. Residues Asn209, Asn325, Asn343, and Asn393 are each glycosylated (N-linked (GlcNAc...) asparagine). A disordered region spans residues 316–345 (ASKRKNQNRNKSNSHQDPSRMPSAGDYNTS). 3 disulfides stabilise this stretch: Cys351/Cys417, Cys380/Cys449, and Cys384/Cys451.

Belongs to the TGF-beta family. In terms of assembly, interacts with ERFE; the interaction inhibits BMP-induced transcription of HAMP.

Its subcellular location is the secreted. In terms of biological role, growth factor of the TGF-beta superfamily that plays essential roles in many developmental processes, including cartilage and bone formation or neurogenesis. Initiates the canonical BMP signaling cascade by associating with type I receptor BMPR1A and type II receptor BMPR2. In turn, BMPR1A propagates signal by phosphorylating SMAD1/5/8 that travel to the nucleus and act as activators and repressors of transcription of target genes. Can also signal through non-canonical pathway such as MAPK p38 signaling cascade to promote chondrogenic differentiation. Promotes the expression of HAMP, this is repressed by its interaction with ERFE. The polypeptide is Bone morphogenetic protein 5 (Bmp5) (Mus musculus (Mouse)).